An 846-amino-acid chain; its full sequence is Translation initiation factor IF-2 (846 aa).

Positions 94-263 are disordered; it reads QRSPEEIQAE…HGFQNPTGPV (170 aa). Positions 96–135 are enriched in basic and acidic residues; it reads SPEEIQAEQKRELEERRAAENAARDKVEAEVRQRNEEQAR. Composition is skewed to low complexity over residues 136–148 and 158–176; these read RQAA…APAP and AAPV…ASED. Basic and acidic residues-rich tracts occupy residues 177 to 206 and 230 to 239; these read AAAR…RGEA and TTDEESDGAR. Over residues 240-253 the composition is skewed to basic residues; sequence RGRGGKSKLKKRNQ. The region spanning 346 to 513 is the tr-type G domain; sequence SRAPVVTVMG…AVLLQAEILE (168 aa). The segment at 355–362 is G1; the sequence is GHVDHGKT. GTP is bound at residue 355-362; that stretch reads GHVDHGKT. A G2 region spans residues 380 to 384; that stretch reads GITQH. The interval 401–404 is G3; that stretch reads DTPG. GTP contacts are provided by residues 401-405 and 455-458; these read DTPGH and NKID. The tract at residues 455–458 is G4; it reads NKID. Residues 491–493 are G5; it reads SAK.

It belongs to the TRAFAC class translation factor GTPase superfamily. Classic translation factor GTPase family. IF-2 subfamily.

The protein localises to the cytoplasm. Functionally, one of the essential components for the initiation of protein synthesis. Protects formylmethionyl-tRNA from spontaneous hydrolysis and promotes its binding to the 30S ribosomal subunits. Also involved in the hydrolysis of GTP during the formation of the 70S ribosomal complex. This is Translation initiation factor IF-2 from Pseudomonas putida (strain ATCC 700007 / DSM 6899 / JCM 31910 / BCRC 17059 / LMG 24140 / F1).